Here is a 145-residue protein sequence, read N- to C-terminus: Aspartate 1-decarboxylase (145 aa).

Residue serine 25 is the Schiff-base intermediate with substrate; via pyruvic acid of the active site. Serine 25 bears the Pyruvic acid (Ser) mark. Threonine 57 lines the substrate pocket. Tyrosine 58 serves as the catalytic Proton donor. Substrate is bound at residue 73 to 75 (GAA).

Belongs to the PanD family. In terms of assembly, heterooctamer of four alpha and four beta subunits. Pyruvate serves as cofactor. Post-translationally, is synthesized initially as an inactive proenzyme, which is activated by self-cleavage at a specific serine bond to produce a beta-subunit with a hydroxyl group at its C-terminus and an alpha-subunit with a pyruvoyl group at its N-terminus.

It localises to the cytoplasm. The catalysed reaction is L-aspartate + H(+) = beta-alanine + CO2. It functions in the pathway cofactor biosynthesis; (R)-pantothenate biosynthesis; beta-alanine from L-aspartate: step 1/1. Catalyzes the pyruvoyl-dependent decarboxylation of aspartate to produce beta-alanine. The polypeptide is Aspartate 1-decarboxylase (Micrococcus luteus (strain ATCC 4698 / DSM 20030 / JCM 1464 / CCM 169 / CCUG 5858 / IAM 1056 / NBRC 3333 / NCIMB 9278 / NCTC 2665 / VKM Ac-2230) (Micrococcus lysodeikticus)).